The chain runs to 396 residues: MLDAQTIATVKATIPLLVETGPKLTAHFYDRMFTHNPELKEIFNMSNQRNGDQREALFNAIAAYASNIENLPALLPAVEKIAQKHTSFQIKPEQYNIVGEHLLATLDEMFSPGQEVLDAWGKAYGVLANVFINREAEIYNENASKAGGWEGTRDFRIVAKTPRSALITSFELEPVDGGAVAEYRPGQYLGVWLKPEGFPHQEIRQYSLTRKPDGKGYRIAVKREEGGQVSNWLHNHANVGDVVKLVAPAGDFFMAVADDTPVTLISAGVGQTPMLAMLDTLAKAGHTAQVNWFHAAENGDVHAFADEVKELGQSLPRFTAHTWYRQPSEADRAKGQFDSEGLMDLSKLEGAFSDPTMQFYLCGPVGFMQFTAKQLVDLGVKQENIHYECFGPHKVL.

Residues 1–136 (MLDAQTIATV…LANVFINREA (136 aa)) enclose the Globin domain. A heme b-binding site is contributed by H85. Residues Y95 and E135 each act as charge relay system in the active site. The tract at residues 147–396 (GGWEGTRDFR…YECFGPHKVL (250 aa)) is reductase. Residues 150 to 255 (EGTRDFRIVA…VAPAGDFFMA (106 aa)) form the FAD-binding FR-type domain. Residues Y188 and 204–207 (RQYS) contribute to the FAD site. 268–273 (GVGQTP) contributes to the NADP(+) binding site. FAD is bound at residue 389–392 (CFGP).

Belongs to the globin family. Two-domain flavohemoproteins subfamily. The protein in the C-terminal section; belongs to the flavoprotein pyridine nucleotide cytochrome reductase family. As to quaternary structure, monomer. FAD is required as a cofactor. Requires heme b as cofactor.

It is found in the cytoplasm. It catalyses the reaction 2 nitric oxide + NADPH + 2 O2 = 2 nitrate + NADP(+) + H(+). It carries out the reaction 2 nitric oxide + NADH + 2 O2 = 2 nitrate + NAD(+) + H(+). Its function is as follows. Is involved in NO detoxification in an aerobic process, termed nitric oxide dioxygenase (NOD) reaction that utilizes O(2) and NAD(P)H to convert NO to nitrate, which protects the bacterium from various noxious nitrogen compounds. Therefore, plays a central role in the inducible response to nitrosative stress. In terms of biological role, in the presence of oxygen and NADH, HMP has NADH oxidase activity, which leads to the generation of superoxide and H(2)O(2), both in vitro and in vivo, and it has been suggested that HMP might act as an amplifier of superoxide stress. Under anaerobic conditions, HMP also exhibits nitric oxide reductase and FAD reductase activities. However, all these reactions are much lower than NOD activity. Functionally, various electron acceptors are also reduced by HMP in vitro, including dihydropterine, ferrisiderophores, ferric citrate, cytochrome c, nitrite, S-nitrosoglutathione, and alkylhydroperoxides. However, it is unknown if these reactions are of any biological significance in vivo. In Escherichia coli (strain K12), this protein is Flavohemoprotein (hmp).